Here is a 316-residue protein sequence, read N- to C-terminus: Small kinetochore-associated protein (316 aa).

Phosphoserine is present on S128. Residues 159–316 (VRKGYKPLSK…LKEMEQLLEM (158 aa)) form an interaction with SPAG5 region. 2 coiled-coil regions span residues 166–216 (LSKQ…FRDN) and 248–316 (SMLL…LLEM).

As to quaternary structure, part of an astrin (SPAG5)-kinastrin (SKAP) complex containing KNSTRN, SPAG5, PLK1, DYNLL1 and SGO2. Interacts with SPAG5. Directly binds to microtubules, although at relatively low affinity. Interacts with CENPE; this interaction greatly favors microtubule-binding. Interacts with DSN1/MIS13; leading to localization to kinetochores. Interacts with MAPRE1/EB1; leading to localization to the microtubule plus ends. Interacts with PRPF19. Interacts with DYNLL1. Interacts with MAP4. As to expression, widely expressed, including in skin.

The protein resides in the nucleus. Its subcellular location is the chromosome. It localises to the centromere. It is found in the kinetochore. The protein localises to the cytoplasm. The protein resides in the cytoskeleton. Its subcellular location is the spindle pole. It localises to the microtubule organizing center. Its function is as follows. Essential component of the mitotic spindle required for faithful chromosome segregation and progression into anaphase. Promotes the metaphase-to-anaphase transition and is required for chromosome alignment, normal timing of sister chromatid segregation, and maintenance of spindle pole architecture. The astrin (SPAG5)-kinastrin (SKAP) complex promotes stable microtubule-kinetochore attachments. Required for kinetochore oscillations and dynamics of microtubule plus-ends during live cell mitosis, possibly by forming a link between spindle microtubule plus-ends and mitotic chromosomes to achieve faithful cell division. May be involved in UV-induced apoptosis via its interaction with PRPF19; however, these results need additional evidences. The protein is Small kinetochore-associated protein of Homo sapiens (Human).